Here is a 293-residue protein sequence, read N- to C-terminus: 4-hydroxy-tetrahydrodipicolinate synthase (293 aa).

T44 provides a ligand contact to pyruvate. Y132 serves as the catalytic Proton donor/acceptor. K160 functions as the Schiff-base intermediate with substrate in the catalytic mechanism. I204 is a pyruvate binding site.

This sequence belongs to the DapA family. Homotetramer; dimer of dimers.

The protein localises to the cytoplasm. The enzyme catalyses L-aspartate 4-semialdehyde + pyruvate = (2S,4S)-4-hydroxy-2,3,4,5-tetrahydrodipicolinate + H2O + H(+). The protein operates within amino-acid biosynthesis; L-lysine biosynthesis via DAP pathway; (S)-tetrahydrodipicolinate from L-aspartate: step 3/4. In terms of biological role, catalyzes the condensation of (S)-aspartate-beta-semialdehyde [(S)-ASA] and pyruvate to 4-hydroxy-tetrahydrodipicolinate (HTPA). The sequence is that of 4-hydroxy-tetrahydrodipicolinate synthase from Hyphomonas neptunium (strain ATCC 15444).